We begin with the raw amino-acid sequence, 98 residues long: Alpha-elicitin DRE-alpha (98 aa).

3 disulfide bridges follow: Cys-3/Cys-71, Cys-27/Cys-56, and Cys-51/Cys-95.

Belongs to the elicitin family.

Its subcellular location is the secreted. Induces local and distal defense responses (incompatible hypersensitive reaction) in plants from the solanaceae and cruciferae families. Elicits leaf necrosis and causes the accumulation of pathogenesis-related proteins. Might interact with the lipidic molecules of the plasma membrane. The sequence is that of Alpha-elicitin DRE-alpha from Phytophthora drechsleri.